Consider the following 1605-residue polypeptide: Pentafunctional AROM polypeptide (1605 aa).

A 3-dehydroquinate synthase region spans residues 1-384; it reads MTGPTKISIL…YEPRASVVPN (384 aa). Residues 44–46, 81–84, 114–116, and Asp119 each bind NAD(+); these read DTN, EVSK, and GGV. Arg130 contributes to the 7-phospho-2-dehydro-3-deoxy-D-arabino-heptonate binding site. 139–140 is a binding site for NAD(+); it reads TT. 2 residues coordinate 7-phospho-2-dehydro-3-deoxy-D-arabino-heptonate: Asp146 and Lys152. Lys161 is a binding site for NAD(+). Asn162 serves as a coordination point for 7-phospho-2-dehydro-3-deoxy-D-arabino-heptonate. NAD(+)-binding positions include 179–182 and Asn190; that span reads FLET. A Zn(2+)-binding site is contributed by Glu194. 7-phospho-2-dehydro-3-deoxy-D-arabino-heptonate contacts are provided by residues 194–197 and Lys250; that span reads EVIK. Glu260 (proton acceptor; for 3-dehydroquinate synthase activity) is an active-site residue. Residues 264-268 and His271 contribute to the 7-phospho-2-dehydro-3-deoxy-D-arabino-heptonate site; that span reads RNLLN. His271 is a binding site for Zn(2+). His275 serves as the catalytic Proton acceptor; for 3-dehydroquinate synthase activity. His287 and Lys356 together coordinate 7-phospho-2-dehydro-3-deoxy-D-arabino-heptonate. A Zn(2+)-binding site is contributed by His287. Residues 397–842 are EPSP synthase; that stretch reads VHPGVSTTSE…WDTLRQKFAV (446 aa). Residue Cys824 is the For EPSP synthase activity of the active site. Residues 864 to 1055 form a shikimate kinase region; that stretch reads SASVFIIGMR…KKKQHSFFVS (192 aa). 871–878 contacts ATP; sequence GMRGAGKT. The 3-dehydroquinase stretch occupies residues 1056–1276; the sequence is LTLPDVRGAD…AAPGQLSATD (221 aa). His1179 functions as the Proton acceptor; for 3-dehydroquinate dehydratase activity in the catalytic mechanism. Lys1207 (schiff-base intermediate with substrate; for 3-dehydroquinate dehydratase activity) is an active-site residue. A shikimate dehydrogenase region spans residues 1289-1605; that stretch reads KKRFALFGSP…LSGRTMLTCS (317 aa).

It in the N-terminal section; belongs to the sugar phosphate cyclases superfamily. Dehydroquinate synthase family. The protein in the 2nd section; belongs to the EPSP synthase family. This sequence in the 3rd section; belongs to the shikimate kinase family. In the 4th section; belongs to the type-I 3-dehydroquinase family. It in the C-terminal section; belongs to the shikimate dehydrogenase family. Homodimer. Zn(2+) serves as cofactor.

It localises to the cytoplasm. The enzyme catalyses 7-phospho-2-dehydro-3-deoxy-D-arabino-heptonate = 3-dehydroquinate + phosphate. The catalysed reaction is 3-dehydroquinate = 3-dehydroshikimate + H2O. It carries out the reaction shikimate + NADP(+) = 3-dehydroshikimate + NADPH + H(+). It catalyses the reaction shikimate + ATP = 3-phosphoshikimate + ADP + H(+). The enzyme catalyses 3-phosphoshikimate + phosphoenolpyruvate = 5-O-(1-carboxyvinyl)-3-phosphoshikimate + phosphate. Its pathway is metabolic intermediate biosynthesis; chorismate biosynthesis; chorismate from D-erythrose 4-phosphate and phosphoenolpyruvate: step 2/7. It functions in the pathway metabolic intermediate biosynthesis; chorismate biosynthesis; chorismate from D-erythrose 4-phosphate and phosphoenolpyruvate: step 3/7. The protein operates within metabolic intermediate biosynthesis; chorismate biosynthesis; chorismate from D-erythrose 4-phosphate and phosphoenolpyruvate: step 4/7. It participates in metabolic intermediate biosynthesis; chorismate biosynthesis; chorismate from D-erythrose 4-phosphate and phosphoenolpyruvate: step 5/7. Its pathway is metabolic intermediate biosynthesis; chorismate biosynthesis; chorismate from D-erythrose 4-phosphate and phosphoenolpyruvate: step 6/7. Its function is as follows. The AROM polypeptide catalyzes 5 consecutive enzymatic reactions in prechorismate polyaromatic amino acid biosynthesis. The protein is Pentafunctional AROM polypeptide of Aspergillus fumigatus (strain CBS 144.89 / FGSC A1163 / CEA10) (Neosartorya fumigata).